A 100-amino-acid chain; its full sequence is Urease subunit gamma (100 aa).

This sequence belongs to the urease gamma subunit family. Heterotrimer of UreA (gamma), UreB (beta) and UreC (alpha) subunits. Three heterotrimers associate to form the active enzyme.

The protein localises to the cytoplasm. It carries out the reaction urea + 2 H2O + H(+) = hydrogencarbonate + 2 NH4(+). It functions in the pathway nitrogen metabolism; urea degradation; CO(2) and NH(3) from urea (urease route): step 1/1. This is Urease subunit gamma from Citrobacter koseri (strain ATCC BAA-895 / CDC 4225-83 / SGSC4696).